We begin with the raw amino-acid sequence, 768 residues long: Ral guanine nucleotide dissociation stimulator-like 1 (768 aa).

In terms of domain architecture, N-terminal Ras-GEF spans 65-196 (KIRTIKAGTL…RAQNLLEQFQ (132 aa)). In terms of domain architecture, Ras-GEF spans 232–501 (SEDLVAEQLT…YALSCEIEAA (270 aa)). Serine 520 bears the Phosphoserine mark. The interval 528-623 (MITSPTPTKE…PPSCNNNPKI (96 aa)) is disordered. 3 stretches are compositionally biased toward low complexity: residues 541–561 (STAS…SCES), 586–596 (ESSSSCSSIHS), and 605–621 (SSLI…NNNP). The region spanning 648-735 (DTCIIRISVE…FDFILRKKNS (88 aa)) is the Ras-associating domain.

As to quaternary structure, interacts with Ras. In terms of tissue distribution, expressed in a wide variety of tissues with strong expression being seen in the heart, brain, kidney, spleen and testis.

Probable guanine nucleotide exchange factor. The protein is Ral guanine nucleotide dissociation stimulator-like 1 (RGL1) of Homo sapiens (Human).